Reading from the N-terminus, the 378-residue chain is Cytochrome b (378 aa).

4 helical membrane-spanning segments follow: residues 32–52 (FGSL…FLAM), 76–97 (WLIR…FLHV), 112–132 (WNIG…GYVL), and 177–197 (FFAF…VHLL). Positions 82 and 96 each coordinate heme b. Residues His-181 and His-195 each contribute to the heme b site. His-200 lines the a ubiquinone pocket. Helical transmembrane passes span 225–245 (IKDA…VLFF), 287–307 (LGGV…PILH), 319–339 (LSQC…WIGG), and 346–366 (FITI…FALP).

The protein belongs to the cytochrome b family. As to quaternary structure, the cytochrome bc1 complex contains 11 subunits: 3 respiratory subunits (MT-CYB, CYC1 and UQCRFS1), 2 core proteins (UQCRC1 and UQCRC2) and 6 low-molecular weight proteins (UQCRH/QCR6, UQCRB/QCR7, UQCRQ/QCR8, UQCR10/QCR9, UQCR11/QCR10 and a cleavage product of UQCRFS1). This cytochrome bc1 complex then forms a dimer. Requires heme b as cofactor.

It localises to the mitochondrion inner membrane. Component of the ubiquinol-cytochrome c reductase complex (complex III or cytochrome b-c1 complex) that is part of the mitochondrial respiratory chain. The b-c1 complex mediates electron transfer from ubiquinol to cytochrome c. Contributes to the generation of a proton gradient across the mitochondrial membrane that is then used for ATP synthesis. In Sciurus aberti (Abert's squirrel), this protein is Cytochrome b (MT-CYB).